Consider the following 565-residue polypeptide: Sulfite reductase [NADPH] hemoprotein beta-component (565 aa).

[4Fe-4S] cluster-binding residues include C429, C435, C474, and C478. C478 lines the siroheme pocket.

Belongs to the nitrite and sulfite reductase 4Fe-4S domain family. Alpha(8)-beta(8). The alpha component is a flavoprotein, the beta component is a hemoprotein. Siroheme serves as cofactor. The cofactor is [4Fe-4S] cluster.

The enzyme catalyses hydrogen sulfide + 3 NADP(+) + 3 H2O = sulfite + 3 NADPH + 4 H(+). It functions in the pathway sulfur metabolism; hydrogen sulfide biosynthesis; hydrogen sulfide from sulfite (NADPH route): step 1/1. Functionally, component of the sulfite reductase complex that catalyzes the 6-electron reduction of sulfite to sulfide. This is one of several activities required for the biosynthesis of L-cysteine from sulfate. The sequence is that of Sulfite reductase [NADPH] hemoprotein beta-component from Shewanella pealeana (strain ATCC 700345 / ANG-SQ1).